The chain runs to 257 residues: MAMFLDTEAKVSKLKKGRRKLWPLPGAPREKQTNVFKFPTDGNDSDEDTNTNSGSSSDGEDGLLTSSGSDSVFNSTDYFSTPEDSQNCTPSDVSDLSDSENLDFKPADVLHDSENSTSPKFITSLVSSDSENSGADSSEEEIEEFIKSKAKQSLQLDAKTEEITSEEDCCVQEDSYDSDGDDVEAFIRQRAEMAITKHKTKRTISTSDDEGPRKSRKKRASKRISSSDDSEDETPKTKMTGTPPLAGNSCYVWPWLN.

Disordered stretches follow at residues 1–178 (MAMF…SYDS) and 194–248 (AITK…LAGN). Over residues 12–21 (SKLKKGRRKL) the composition is skewed to basic residues. Positions 50–71 (NTNSGSSSDGEDGLLTSSGSDS) are enriched in low complexity. Residues 72–94 (VFNSTDYFSTPEDSQNCTPSDVS) are compositionally biased toward polar residues. Basic and acidic residues predominate over residues 102–114 (LDFKPADVLHDSE). The span at 115-126 (NSTSPKFITSLV) shows a compositional bias: polar residues. Residues 127–136 (SSDSENSGAD) show a composition bias toward low complexity. The segment covering 163–178 (ITSEEDCCVQEDSYDS) has biased composition (acidic residues).

It belongs to the herpesviridae BKRF4 family.

This is an uncharacterized protein from Saimiriine herpesvirus 2 (strain 11) (SaHV-2).